The primary structure comprises 37 residues: Photosystem II reaction center protein T (37 aa).

The chain crosses the membrane as a helical span at residues 3–23; sequence ALVYTFLLVSTLGILFFAIFF.

The protein belongs to the PsbT family. As to quaternary structure, PSII is composed of 1 copy each of membrane proteins PsbA, PsbB, PsbC, PsbD, PsbE, PsbF, PsbH, PsbI, PsbJ, PsbK, PsbL, PsbM, PsbT, PsbY, PsbZ, Psb30/Ycf12, at least 3 peripheral proteins of the oxygen-evolving complex and a large number of cofactors. It forms dimeric complexes.

It is found in the plastid. It localises to the chloroplast thylakoid membrane. In terms of biological role, found at the monomer-monomer interface of the photosystem II (PS II) dimer, plays a role in assembly and dimerization of PSII. PSII is a light-driven water plastoquinone oxidoreductase, using light energy to abstract electrons from H(2)O, generating a proton gradient subsequently used for ATP formation. This Ephedra sinica (Chinese ephedra) protein is Photosystem II reaction center protein T.